Consider the following 291-residue polypeptide: MTLLLELAHGLPWLYFSLVFLFSLMIGSFLNVVIHRLPIMLEREWQAEYRSYFSSDTPQPEDDERYNLMVPRSCCPRCNHPITALENIPLLSWLWLKGRCRGCQAAISARYPLVELLTALLSVVVAMTLTPGWGTLAALLLTWVLVALTFIDLDKMLLPDQLTLPLLWGGLLFNLLGGYVPLGDAVIGAMAGYLVLWSLYWAFKLLTGKEGMGYGDFKLLAALGAWLGWQALPIVLLLSSLVGAIFGIGLILLRNHHQSKPIPFGPYLAIAGWIALLWGDSITRWYLSTIL.

Residues 14-34 (LYFSLVFLFSLMIGSFLNVVI) form a helical membrane-spanning segment. Residues cysteine 75, cysteine 78, cysteine 100, and cysteine 103 each coordinate Zn(2+). The next 6 helical transmembrane spans lie at 107–127 (ISARYPLVELLTALLSVVVAM), 131–151 (PGWGTLAALLLTWVLVALTFI), 162–182 (LTLPLLWGGLLFNLLGGYVPL), 186–206 (VIGAMAGYLVLWSLYWAFKLL), 232–252 (LPIVLLLSSLVGAIFGIGLIL), and 262–282 (IPFGPYLAIAGWIALLWGDSI).

It belongs to the peptidase A24 family. Zn(2+) serves as cofactor.

It localises to the cell inner membrane. The catalysed reaction is Typically cleaves a -Gly-|-Phe- bond to release an N-terminal, basic peptide of 5-8 residues from type IV prepilin, and then N-methylates the new N-terminal amino group, the methyl donor being S-adenosyl-L-methionine.. Its function is as follows. Plays an essential role in type IV pili and type II pseudopili formation by proteolytically removing the leader sequence from substrate proteins and subsequently monomethylating the alpha-amino group of the newly exposed N-terminal phenylalanine. This is Prepilin leader peptidase/N-methyltransferase (tapD) from Aeromonas salmonicida (strain A449).